The sequence spans 1090 residues: MSSSDDLDEDELLQMALKEQSQRDVTYQKPPSANSRKPVTNLVQQPRRQKRAAAPPSKGGAKASRKPSMDEDDESEVELLSISSGDEDEGNDRGRGGGGDGGGGRGRGGSGKERGRARKEDDRAWDGVEPDCWKRVNEAELARKVRDMRESRTAPSVTQNLDRKVSGADKKVVLTSLQSFPRGMECIDPLKLGIIDNKTLRLITESSESLSKAEKVDNALREKLVYTSDHFDPKLFISRIHQETSAADLESGALALKSDLKGRNLQRKQLVKDNFDCFVSCKTTIDDIESKLKRIEDDPDGSGTTHLFNCMKSVTSRANRAFEPLFERQAQAEKIRSVQGMLQRFRTLFNLPSIIRSSISKGEYDLAVREYKKAKSIALPSHVNLLKRVLEEVEKVMQEFKGTLYRSMEDPKIDFTSLENTVRLLLELEPESDPVWHYLNVQNHRIHGMLEKCTFDHEARMEILRNQVHERALSDAKWRQIQQNGVQLSDDTSSMEDNQVQVDQPLEESARREKDALRGRYIKILTAVIVYHLPTFWKTALSVFTGKFAKSSQVNDTSASKAEEKAEEARYSSHSLEEIAGMIRNTISVYEAKVQSTFHDFDESYILHPYMSDTIKEVSKACQAFEAKESAPHSAVMALRKVKVEITKIYIQRLCSWMRASTEEISKEETWIPVSILERNRSPYSISYLPLAFRSIIVSGMEQINMMILSLKGEAARSEDMFAHIEEILISVRLAFLNCFLDFAAHLEQIGADLSQRTTKRESWQNGYSNDHQEEQSINAPESVVDPHRQLLMILSNIGYCKDELASELYNKYKYTWLQSRRNDEDISDLQDLMMSFSGLGEKVLEHYTFAKANLIRTAATNYLLDSGIQWGAAPPVKGIRDAAVELLHTLVAVHAEVFAGAKPLLDKILGTLVEGLIDTFLSLLDENRSDDLSSIDANGFCQLMLELEYFETILKPYLTVDATESLKSLQGAVLEKAIESISETVENNPGGHQRKPTRGSEDAISDDKQSSVSPDDLLALAQQCTSGMLQLELEKTRLNSACFIETIPLDPVPPVAKAAYSRTSTDSPSRNYRESQPMGSPVQARPRRR.

Over residues 1–12 (MSSSDDLDEDEL) the composition is skewed to acidic residues. The tract at residues 1–126 (MSSSDDLDED…ARKEDDRAWD (126 aa)) is disordered. Polar residues predominate over residues 23 to 46 (RDVTYQKPPSANSRKPVTNLVQQP). Low complexity predominate over residues 52 to 62 (AAAPPSKGGAK). The segment covering 96–109 (GGGGDGGGGRGRGG) has biased composition (gly residues). Positions 110–126 (SGKERGRARKEDDRAWD) are enriched in basic and acidic residues. Ser179 carries the phosphoserine modification. A compositionally biased stretch (polar residues) spans 486–502 (VQLSDDTSSMEDNQVQV). Disordered stretches follow at residues 486–511 (VQLS…ESAR), 984–1013 (ETVE…QSSV), and 1055–1090 (PVAK…PRRR). The span at 999–1010 (RGSEDAISDDKQ) shows a compositional bias: basic and acidic residues. Residues 1062–1071 (SRTSTDSPSR) are compositionally biased toward polar residues.

Belongs to the SEC5 family. In terms of assembly, the exocyst complex is composed of SEC3, SEC5, SEC6, SEC8, SEC10, EXO70A1 and EXO84B.

Functionally, component of the exocyst complex involved in the docking of exocytic vesicles with fusion sites on the plasma membrane during regulated or polarized secretion. Involved in polarized cell growth and organ morphogenesis. During cytokinesis, involved in cell plate initiation, cell plate maturation and formation of new primary cell wall. The chain is Exocyst complex component SEC5B (SEC5B) from Arabidopsis thaliana (Mouse-ear cress).